A 403-amino-acid chain; its full sequence is Peroxisomal membrane protein PEX13 (403 aa).

Residues 1 to 11 (MASQPPPPPKP) are compositionally biased toward pro residues. Residues 1–68 (MASQPPPPPK…PSQQTGSSSV (68 aa)) are disordered. At 1–134 (MASQPPPPPK…SSRGAFQSIE (134 aa)) the chain is on the peroxisomal matrix side. The span at 59–68 (PSQQTGSSSV) shows a compositional bias: polar residues. The helical transmembrane segment at 135–155 (SIVHAFASVSMMMDATFSAVY) threads the bilayer. Residues 145-233 (MMMDATFSAV…EDRAATSAKS (89 aa)) are targeting to peroxisomes. Over 156-174 (NSFRAVLDVANHFSRLKIH) the chain is Cytoplasmic. Residues 175-192 (FTKVFSAFALVRTIRYLY) form a helical membrane-spanning segment. Positions 175–196 (FTKVFSAFALVRTIRYLYRRLQ) are interaction with PEX19. The Peroxisomal matrix segment spans residues 193-233 (RRLQRMLGLRRGSENEDLWAESEGTVACLGAEDRAATSAKS). Residues 234–254 (WPIFLFFAVILGGPYLIWKLL) form a helical membrane-spanning segment. Residues 255 to 403 (STHSDEVTDS…IGKDGEKQDL (149 aa)) lie on the Cytoplasmic side of the membrane. One can recognise an SH3 domain in the interval 272 to 336 (DDHVVARAEY…PANYVKILGK (65 aa)). Residue Ser-354 is modified to Phosphoserine.

This sequence belongs to the peroxin-13 family. As to quaternary structure, interacts (via SH3 domain) with PEX14 (via SH3-binding motif); forming the PEX13-PEX14 docking complex. Interacts with PEX19.

The protein localises to the peroxisome membrane. Its function is as follows. Component of the PEX13-PEX14 docking complex, a translocon channel that specifically mediates the import of peroxisomal cargo proteins bound to PEX5 receptor. The PEX13-PEX14 docking complex forms a large import pore which can be opened to a diameter of about 9 nm. Mechanistically, PEX5 receptor along with cargo proteins associates with the PEX14 subunit of the PEX13-PEX14 docking complex in the cytosol, leading to the insertion of the receptor into the organelle membrane with the concomitant translocation of the cargo into the peroxisome matrix. Involved in the import of PTS1- and PTS2-type containing proteins. This Homo sapiens (Human) protein is Peroxisomal membrane protein PEX13.